A 513-amino-acid chain; its full sequence is Histidine ammonia-lyase (513 aa).

A cross-link (5-imidazolinone (Ala-Gly)) is located at residues 144–146; that stretch reads ASG. 2,3-didehydroalanine (Ser) is present on S145.

The protein belongs to the PAL/histidase family. In terms of processing, contains an active site 4-methylidene-imidazol-5-one (MIO), which is formed autocatalytically by cyclization and dehydration of residues Ala-Ser-Gly.

The protein localises to the cytoplasm. It carries out the reaction L-histidine = trans-urocanate + NH4(+). It participates in amino-acid degradation; L-histidine degradation into L-glutamate; N-formimidoyl-L-glutamate from L-histidine: step 1/3. This Streptococcus sanguinis (strain SK36) protein is Histidine ammonia-lyase.